Consider the following 192-residue polypeptide: Adenylate kinase (192 aa).

Position 10–18 (10–18) interacts with ATP; it reads GVPGVGGTT.

Belongs to the archaeal adenylate kinase family. Monomer.

The protein resides in the cytoplasm. It carries out the reaction AMP + ATP = 2 ADP. This chain is Adenylate kinase (adkA), found in Methanothermococcus thermolithotrophicus (Methanococcus thermolithotrophicus).